We begin with the raw amino-acid sequence, 361 residues long: DNA replication and repair protein RecF (361 aa).

30 to 37 (GDNAQGKT) contributes to the ATP binding site.

The protein belongs to the RecF family.

Its subcellular location is the cytoplasm. Its function is as follows. The RecF protein is involved in DNA metabolism; it is required for DNA replication and normal SOS inducibility. RecF binds preferentially to single-stranded, linear DNA. It also seems to bind ATP. The protein is DNA replication and repair protein RecF of Clostridium botulinum (strain Alaska E43 / Type E3).